Here is a 59-residue protein sequence, read N- to C-terminus: UPF0434 protein lpl1884 (59 aa).

This sequence belongs to the UPF0434 family.

The polypeptide is UPF0434 protein lpl1884 (Legionella pneumophila (strain Lens)).